The sequence spans 913 residues: Transient receptor potential cation channel protein painless (913 aa).

Residues 1–490 (MDFNNCGFID…SSFLFLKWHR (490 aa)) lie on the Cytoplasmic side of the membrane. ANK repeat units follow at residues 154–189 (GEFT…DIDS), 260–289 (EYFG…DINS), and 368–397 (GRLV…YIGS). A helical transmembrane segment spans residues 491–511 (LSVIFYLNFLIYSLFTASIIT). Topologically, residues 512–523 (YTLLKFHESDQR) are extracellular. A helical transmembrane segment spans residues 524–544 (ALTAFFGLLSWLGISYLILRE). The Cytoplasmic segment spans residues 545 to 555 (CIQWIMSPVRY). Residues 556 to 576 (FWSITNIMEVALITLSIFTCM) form a helical membrane-spanning segment. The Extracellular segment spans residues 577–586 (ESSFDKETQR). Residues 587 to 607 (VLAVFTILLVSMEFCLLVGSL) traverse the membrane as a helical segment. Residues 608 to 628 (PVLSISTHMLMLREVSNSFLK) lie on the Cytoplasmic side of the membrane. Residues 629-649 (SFTLYSIFVLTFSLCFYILFG) form a helical membrane-spanning segment. The Extracellular portion of the chain corresponds to 650–708 (KSVEEDQSKSATPCPPLGKKEGKDEEQGFNTFTKPIEAVIKTIVMLTGEFDAGSIQFTS). A disordered region spans residues 656–675 (QSKSATPCPPLGKKEGKDEE). Residues 709-729 (IYTYLIFLLFVIFMTIVLFNL) traverse the membrane as a helical segment. Topologically, residues 730–913 (LNGLAVSDTQ…QLIQLVQDRK (184 aa)) are cytoplasmic.

This sequence belongs to the transient receptor (TC 1.A.4) family. As to expression, present in multidendritic neurons, chordotonal neurons, a subset of cells in the central nervous system and a subset of sensory neurons in the antennal-maxillary complex. Not detected in gonads and dorsal vessels (at protein level). Expressed in peripheral neurons that extend multiple branched dendrites beneath the larval epidermis, similar to vertebrate pain receptors.

The protein localises to the membrane. Its function is as follows. Receptor-activated non-selective cation channel involved in detection of pain sensation due to high temperature. Involved in heat nociception by being activated by noxious temperature of 38 degrees Celsius. The chain is Transient receptor potential cation channel protein painless (pain) from Drosophila melanogaster (Fruit fly).